A 562-amino-acid chain; its full sequence is MPRALRRVPGSRVMLRVGVVVAVLALVAALANLAVPRPARAAGGGYWHTSGREILDANNVPVRIAGINWFGFETCNYVVHGLWSRDYRSMLDQIKSLGYNTIRLPYSDDILKPGTMPNSINFYQMNQDLQGLTSLQVMDKIVAYAGQIGLRIILDRHRPDCSGQSALWYTSSVSEATWISDLQALAQRYKGNPTVVGFDLHNEPHDPACWGCGDPSIDWRLAAERAGNAVLSVNPNLLIFVEGVQSYNGDSYWWGGNLQGAGQYPVVLNVPNRLVYSAHDYATSVYPQTWFSDPTFPNNMPGIWNKNWGYLFNQNIAPVWLGEFGTTLQSTTDQTWLKTLVQYLRPTAQYGADSFQWTFWSWNPDSGDTGGILKDDWQTVDTVKDGYLAPIKSSIFDPVGASASPSSQPSPSVSPSPSPSPSASRTPTPTPTPTASPTPTLTPTATPTPTASPTPSPTAASGARCTASYQVNSDWGNGFTVTVAVTNSGSVATKTWTVSWTFGGNQTITNSWNAAVTQNGQSVTARNMSYNNVIQPGQNTTFGFQASYTGSNAAPTVACAAS.

The signal sequence occupies residues 1 to 41; it reads MPRALRRVPGSRVMLRVGVVVAVLALVAALANLAVPRPARA. The catalytic stretch occupies residues 42–400; the sequence is AGGGYWHTSG…IKSSIFDPVG (359 aa). Residues cysteine 75 and cysteine 161 are joined by a disulfide bond. Catalysis depends on glutamate 203, which acts as the Proton donor. Cysteine 209 and cysteine 212 are oxidised to a cystine. The Nucleophile role is filled by glutamate 323. The interval 399–462 is disordered; it reads VGASASPSSQ…PTPSPTAASG (64 aa). Low complexity-rich tracts occupy residues 401–411 and 437–449; these read ASASPSSQPSP and PTPTLTPTATPTP. Positions 458-562 constitute a CBM2 domain; sequence TAASGARCTA…AAPTVACAAS (105 aa).

This sequence belongs to the glycosyl hydrolase 5 (cellulase A) family.

The enzyme catalyses Endohydrolysis of (1-&gt;4)-beta-D-glucosidic linkages in cellulose, lichenin and cereal beta-D-glucans.. Its function is as follows. Has a very high specific activity on carboxymethylcellulose. This Acidothermus cellulolyticus (strain ATCC 43068 / DSM 8971 / 11B) protein is Endoglucanase E1.